Consider the following 128-residue polypeptide: Ribosome-binding factor A (128 aa).

Belongs to the RbfA family. As to quaternary structure, monomer. Binds 30S ribosomal subunits, but not 50S ribosomal subunits or 70S ribosomes.

The protein resides in the cytoplasm. Functionally, one of several proteins that assist in the late maturation steps of the functional core of the 30S ribosomal subunit. Associates with free 30S ribosomal subunits (but not with 30S subunits that are part of 70S ribosomes or polysomes). Required for efficient processing of 16S rRNA. May interact with the 5'-terminal helix region of 16S rRNA. The chain is Ribosome-binding factor A from Rickettsia prowazekii (strain Madrid E).